Reading from the N-terminus, the 300-residue chain is Urease accessory protein UreD (300 aa).

This sequence belongs to the UreD family. UreD, UreF and UreG form a complex that acts as a GTP-hydrolysis-dependent molecular chaperone, activating the urease apoprotein by helping to assemble the nickel containing metallocenter of UreC. The UreE protein probably delivers the nickel.

Its subcellular location is the cytoplasm. In terms of biological role, required for maturation of urease via the functional incorporation of the urease nickel metallocenter. The polypeptide is Urease accessory protein UreD (Prochlorococcus marinus (strain AS9601)).